The sequence spans 237 residues: Ribonuclease 3 (237 aa).

One can recognise an RNase III domain in the interval 6 to 133 (LIEVEKLIGI…VIAAVYLDKG (128 aa)). E46 lines the Mg(2+) pocket. D50 is a catalytic residue. Positions 119 and 122 each coordinate Mg(2+). Residue E122 is part of the active site. The region spanning 160–229 (DFKTRLQEVL…AKAALQRLGE (70 aa)) is the DRBM domain.

It belongs to the ribonuclease III family. As to quaternary structure, homodimer. Mg(2+) is required as a cofactor.

It is found in the cytoplasm. The enzyme catalyses Endonucleolytic cleavage to 5'-phosphomonoester.. In terms of biological role, digests double-stranded RNA. Involved in the processing of primary rRNA transcript to yield the immediate precursors to the large and small rRNAs (23S and 16S). Processes some mRNAs, and tRNAs when they are encoded in the rRNA operon. Processes pre-crRNA and tracrRNA of type II CRISPR loci if present in the organism. The chain is Ribonuclease 3 from Clostridium perfringens (strain 13 / Type A).